Reading from the N-terminus, the 467-residue chain is Histone acetyltransferase type B catalytic subunit (467 aa).

Residues 1–24 are disordered; that stretch reads MVQKQQASAGPGTEPKKRRRVGFS. Acetyl-CoA contacts are provided by residues 249-251 and 256-262; these read ILV and QGKGLGS. The active-site Proton donor/acceptor is Glu283.

Belongs to the HAT1 family.

The protein localises to the nucleus. It localises to the cytoplasm. It catalyses the reaction L-lysyl-[protein] + acetyl-CoA = N(6)-acetyl-L-lysyl-[protein] + CoA + H(+). Functionally, acetylates soluble but not nucleosomal H4. Acetylates 'Lys-12' of histone H4. The chain is Histone acetyltransferase type B catalytic subunit (HAG2) from Arabidopsis thaliana (Mouse-ear cress).